Reading from the N-terminus, the 177-residue chain is ADP-ribose 1''-phosphate phosphatase (177 aa).

Residues Met1–Leu177 enclose the Macro domain. Substrate contacts are provided by residues Gly9–Ile11, Ser24–Asn26, Trp31–Ala36, and Ile147–Gly153.

The protein belongs to the POA1 family.

It carries out the reaction ADP-alpha-D-ribose 1''-phosphate + H2O = ADP-D-ribose + phosphate. Functionally, highly specific phosphatase involved in the metabolism of ADP-ribose 1''-phosphate (Appr1p) which is produced as a consequence of tRNA splicing. Removes ADP-ribose from glutamate residues in proteins bearing a single ADP-ribose moiety. Inactive towards proteins bearing poly-ADP-ribose. This Saccharomyces cerevisiae (strain YJM789) (Baker's yeast) protein is ADP-ribose 1''-phosphate phosphatase (POA1).